We begin with the raw amino-acid sequence, 491 residues long: MIPVVALVGRPNVGKSTLFNRLTRTRDALVADFPGLTRDRKYGRAFLSGYEFIVVDTGGIDGSEEGIETKMAEQSLAAIEEADVVLFLTDARAGLTSADLAIAQHLRSRDKTTFVVANKVDGIDADSVCGEFWALGLGEVYQMAAAQGRGVTNMIEYALAPYAEAMGLNRDDDEQAIEEEREYTEEEAEAEQKRLQDLPIKLAIIGKPNVGKSTLINRILGEERVVVYDAPGTTRDSIYIPMEREGREYVLIDTAGVRRRSKVHEVIEKFSVIKTLKAVEDANVVLLVVDAREGIAEQDLGLLGFTLNAGRALVIAVNKWDGIDQTVKDRVKSELDRRLGFIDFAKIHFISALHGTGVGHLYESIEEAYDSATRRVSTSMLTRVMQMSQDDHQPPLVNGRRVKLKYAHAGGYNPPIIVVHGNQVSKLPDSYKRYMMNYFRRSLKVVGTPIQIRFQEGDNPFEGKVDKLTMGQERRRKRALSHINDRKTKGE.

EngA-type G domains are found at residues 3-166 (PVVA…AEAM) and 200-373 (IKLA…DSAT). GTP-binding positions include 9–16 (GRPNVGKS), 56–60 (DTGGI), 118–121 (NKVD), 206–213 (GKPNVGKS), 253–257 (DTAGV), and 318–321 (NKWD). The region spanning 374–458 (RRVSTSMLTR…PIQIRFQEGD (85 aa)) is the KH-like domain. Residues 472 to 491 (QERRRKRALSHINDRKTKGE) form a disordered region.

It belongs to the TRAFAC class TrmE-Era-EngA-EngB-Septin-like GTPase superfamily. EngA (Der) GTPase family. As to quaternary structure, associates with the 50S ribosomal subunit.

Functionally, GTPase that plays an essential role in the late steps of ribosome biogenesis. The polypeptide is GTPase Der (Shewanella denitrificans (strain OS217 / ATCC BAA-1090 / DSM 15013)).